A 222-amino-acid polypeptide reads, in one-letter code: MRVRLGALAGAAALSGALSFVLLAAAIGTDFWYIIDTERLERSSQRMRDQGPANRSQQEPLSSHSGLWRTCRVQSSCTPLMNPFWQENVTVSDSSRQLLTMHGTFVILLPLSLIVMVFGGMTGFLSFLLRAHLLLLLTGILFLFGAMVTLTGISIYIAYSAVAFREAVCLLEERALLDQVDIRFGWSLALGWISFVSELLTGVVFLAAARALSLSQRQDQAI.

The helical transmembrane segment at 7–27 threads the bilayer; sequence ALAGAAALSGALSFVLLAAAI. N-linked (GlcNAc...) asparagine glycans are attached at residues Asn54 and Asn88. A run of 3 helical transmembrane segments spans residues 105–125, 133–153, and 188–208; these read FVILLPLSLIVMVFGGMTGFL, LLLLLTGILFLFGAMVTLTGI, and LALGWISFVSELLTGVVFLAA.

The protein resides in the cell junction. The protein localises to the tight junction. It is found in the lateral cell membrane. It localises to the apical cell membrane. This Mus musculus (Mouse) protein is Transmembrane protein 114.